We begin with the raw amino-acid sequence, 513 residues long: Glutamyl-tRNA(Gln) amidotransferase subunit A (513 aa).

Catalysis depends on charge relay system residues K85 and S160. S184 serves as the catalytic Acyl-ester intermediate.

It belongs to the amidase family. GatA subfamily. Heterotrimer of A, B and C subunits.

It catalyses the reaction L-glutamyl-tRNA(Gln) + L-glutamine + ATP + H2O = L-glutaminyl-tRNA(Gln) + L-glutamate + ADP + phosphate + H(+). Functionally, allows the formation of correctly charged Gln-tRNA(Gln) through the transamidation of misacylated Glu-tRNA(Gln) in organisms which lack glutaminyl-tRNA synthetase. The reaction takes place in the presence of glutamine and ATP through an activated gamma-phospho-Glu-tRNA(Gln). The sequence is that of Glutamyl-tRNA(Gln) amidotransferase subunit A from Bifidobacterium longum (strain NCC 2705).